The following is a 1238-amino-acid chain: uncharacterized protein (1238 aa).

Disordered regions lie at residues Leu22–Leu83, Ser96–Pro150, Phe169–Leu250, Gln264–Val694, Thr739–Glu915, Thr936–Glu955, and Pro1057–Ser1089. Low complexity predominate over residues Gln35 to Gln49. The span at Pro58–Thr72 shows a compositional bias: polar residues. The span at Gln73–Leu83 shows a compositional bias: low complexity. Residues Ser96 to Asn110 show a composition bias toward polar residues. A compositionally biased stretch (low complexity) spans Ser125 to Asn145. The span at Ser188–His204 shows a compositional bias: polar residues. Low complexity-rich tracts occupy residues Ser272–Pro287, Pro309–His334, and Ser393–Asn406. A compositionally biased stretch (polar residues) spans Ser433–Pro450. Phosphoserine is present on Ser453. Residues Pro463–Thr472 show a composition bias toward polar residues. The span at Thr523–Lys536 shows a compositional bias: basic and acidic residues. Low complexity-rich tracts occupy residues Gln549–Ser570 and Thr632–Ala641. Thr642 is subject to Phosphothreonine. Over residues Glu678–Glu688 the composition is skewed to basic and acidic residues. A phosphoserine mark is found at Ser682, Ser749, and Ser753. The span at Ile755–Pro764 shows a compositional bias: polar residues. Phosphoserine occurs at positions 793 and 799. Residues Ser832–Gly860 show a composition bias toward low complexity. The segment covering Ala861–Ser874 has biased composition (basic residues). Residues His937–Thr947 are compositionally biased toward basic and acidic residues. Polar residues predominate over residues Asp1071–Ser1089. The C2HC pre-PHD-type; degenerate zinc finger occupies Ser1089–Ile1131. Phosphoserine is present on Ser1099. The segment at Tyr1151 to Arg1199 adopts a PHD-type zinc-finger fold.

This is an uncharacterized protein from Drosophila melanogaster (Fruit fly).